The following is a 1237-amino-acid chain: MASSSPLQAAAGDRLLPGGPGPSPEAEDDPGEGFEFDDSDDDEDTNAGPDVPRSALETEADTPLIHLDSAPVIDLEPKPEPAQPQTQRPAAVSNGDAVDAAFSEVQRSGWRRKSSRRIERFTFPAVEEDVIYDDVPCENLDAQQPEAERNQPYEDARQDRAPQEPEDLGWSSSEFESYSEDSGEEAKPEAEPTKHRVSFQPKMTQLMKAAKSGTKDGLEKTRIAVMRKVSFLHRKDVLGDSEEEDMGLLEVSVSDIKPPAPELGPMPAGLTPQQVVRRHILGSIVQSEGSYVDSLKRVLQDYRNPLMEMEPKALSARKCRAVFFRVKEILHCHSMFQIALSSRVAEWDSTEKIGDLFVASFSKSMVLDVYSDYVNNFTNAMSIIKKACLTKPAFLEFLKRRQVCSPDRVTLYGLMVKPIQRFPQFILLLQDMLKNTPRGHPDRLSLQLALTELETLAEKLNEQKRLADQVAEIQQLTKSVSDRSSLNKLLTSGQRQLLLCETLTETVYGDRGQLIKSKERRVFLLNDMLVCANINFKGQLEISSLAPLGPKYVVKWSTALPQVQVVEVGQEGGPYDKDNALIQHAGAKKASAAGQAQNKVYLGPPRLFQELQDLQKDLAVVEQITLLVSTLHGTYQNLNMTVAQDWCLALQRLMRVKEEEIHSANKCRLRLLLPGKPDKSGRPISFMVVFITPNPLSKISWVNRLHLAKIGLREENQPGWLCPDEDKQSRAPFWCPILACCVPAFSFRGLSLQLGALVHSPVSCPLLGFSAVSTSLPQGYLWVGGGQEGAGGQVEIFSLNRPSPRTVKSFPLAAPVLCMEYIPEPEEGDGRNGDKGCPAADASAGVHPTICLGLQDGSILLYSSVDTGTQCLAACRSPGLQPVLCLRHSPFHLLAGLQDGTLAAYPRTSGSVPWDLESPPMCLPVGPGPVRALLSLEEAVWASCGPRVTVLDATSLQTQQSFEAHQDEAVSVTHMVKAGSGVWMAFSSGSSIRLFHTETLEHLQEINIATRTTFLLPGQKHLCVTSLLICQGLLWVGTDQGVIVLLPVPRLEGIPKITGKGMVSLNGHCGPVAFLAVATSILAPDILRSDQEEAEGQQAEEDKPDGPAPEPAPVPASHVGGELIRKKGILLQYRLRSTSHLPGPLLSVREPEPADGSALEHSEEDGSIYEMVDDPDVWVHNRPCARDAHRKEICSVAIISGGRGYRNFGSAAGSPGKPAPCGETDSTLLIWQAPLTL.

Disordered stretches follow at residues 1 to 117 (MASS…SSRR) and 132 to 203 (YDDV…QPKM). Residues 25 to 45 (EAEDDPGEGFEFDDSDDDEDT) are compositionally biased toward acidic residues. Serine 39 carries the phosphoserine modification. 2 positions are modified to phosphotyrosine: tyrosine 132 and tyrosine 153. 2 stretches are compositionally biased toward basic and acidic residues: residues 146-163 (EAER…RAPQ) and 184-194 (EEAKPEAEPTK). At serine 241 the chain carries Phosphoserine. The DH domain maps to 276–463 (VRRHILGSIV…ETLAEKLNEQ (188 aa)). 2 disordered regions span residues 1091–1118 (QEEA…PASH) and 1142–1164 (PGPL…HSEE).

As to quaternary structure, interacts with RHOA, RHOB and RHOC.

The protein resides in the cytoplasm. Its function is as follows. Acts as a guanine nucleotide exchange factor (GEF) for RHOA, RHOB and RHOC. The protein is Rho guanine nucleotide exchange factor 10-like protein (ARHGEF10L) of Bos taurus (Bovine).